The chain runs to 558 residues: Protein NRT1/ PTR FAMILY 2.3 (558 aa).

Helical transmembrane passes span threonine 33–isoleucine 53, valine 69–phenylalanine 89, isoleucine 92–isoleucine 112, valine 128–valine 148, phenylalanine 176–valine 196, serine 203–valine 223, leucine 329–leucine 349, valine 371–methionine 391, leucine 403–valine 423, valine 439–alanine 459, serine 478–isoleucine 498, and valine 517–tryptophan 537.

The protein belongs to the major facilitator superfamily. Proton-dependent oligopeptide transporter (POT/PTR) (TC 2.A.17) family. Expressed in flowers, siliques and root epidermis or cortex. Detected in shoots.

It localises to the membrane. In terms of biological role, transporter involved in a passive nitrate efflux. This is Protein NRT1/ PTR FAMILY 2.3 (NPF2.3) from Arabidopsis thaliana (Mouse-ear cress).